Consider the following 1273-residue polypeptide: Ras-specific guanine nucleotide-releasing factor 1 (1273 aa).

In terms of domain architecture, PH 1 spans 22 to 129 (DGTRKGYLSK…WVAAIAHASY (108 aa)). The IQ domain occupies 204–229 (KKIKKVQSFLRGWLCRRKWKTIIQDY). Residues 240–426 (KRNQVVFSML…EELSRIMHDE (187 aa)) enclose the DH domain. Positions 467 to 584 (PMSEKGKITR…WTSDISQCVD (118 aa)) constitute a PH 2 domain. Residues serine 577 and serine 626 each carry the phosphoserine; by PLK2 modification. The N-terminal Ras-GEF domain maps to 644 to 761 (KVLQIRYASV…SRRRKLSLNI (118 aa)). Residues 724–754 (YGEPPKSPRATRKFSSPPPLSITKTSSPSRR) are disordered. Position 758 is a phosphoserine (serine 758). Phosphoserine; by PLK2 is present on residues serine 779 and serine 800. Positions 809 to 874 (TNKIPDEGDT…PKSVKNKNSS (66 aa)) are disordered. The span at 842–854 (SDIDQNQSDDGDT) shows a compositional bias: acidic residues. Residues 855 to 867 (ETSPTKSPTTPKS) are compositionally biased toward low complexity. One can recognise a Ras-GEF domain in the interval 1038–1270 (SALEIAEQLT…YESSLRIEPK (233 aa)).

In terms of assembly, homooligomer and heterooligomer with RASGRF2. Interacts with USP8, thereby regulating its stability. Phosphorylated by PLK2, leading to ubiquitination and degradation by the proteasome. In terms of processing, ubiquitinated and degraded following phosphorylation by PLK2. Post-translationally, phosphorylated by SRC and LCK. Phosphorylation by LCK increases its capacity to stimulate the GDP/GTP exchange on Ras, whereas its phosphorylation by SRC seems not to have an effect on stimulation activity.

Functionally, promotes the exchange of Ras-bound GDP by GTP. The chain is Ras-specific guanine nucleotide-releasing factor 1 (RASGRF1) from Homo sapiens (Human).